A 264-amino-acid polypeptide reads, in one-letter code: Type III pantothenate kinase (264 aa).

ATP is bound at residue 6 to 13 (DSGNSRLK). Substrate contacts are provided by residues tyrosine 92 and 99 to 102 (GADR). The active-site Proton acceptor is aspartate 101. Threonine 127 is an ATP binding site. Threonine 177 is a substrate binding site.

The protein belongs to the type III pantothenate kinase family. Homodimer. NH4(+) serves as cofactor. K(+) is required as a cofactor.

The protein localises to the cytoplasm. It catalyses the reaction (R)-pantothenate + ATP = (R)-4'-phosphopantothenate + ADP + H(+). It participates in cofactor biosynthesis; coenzyme A biosynthesis; CoA from (R)-pantothenate: step 1/5. Catalyzes the phosphorylation of pantothenate (Pan), the first step in CoA biosynthesis. In Bordetella petrii (strain ATCC BAA-461 / DSM 12804 / CCUG 43448), this protein is Type III pantothenate kinase.